We begin with the raw amino-acid sequence, 72 residues long: Translation initiation factor IF-1 (72 aa).

The S1-like domain occupies methionine 1–lysine 72.

This sequence belongs to the IF-1 family. Component of the 30S ribosomal translation pre-initiation complex which assembles on the 30S ribosome in the order IF-2 and IF-3, IF-1 and N-formylmethionyl-tRNA(fMet); mRNA recruitment can occur at any time during PIC assembly.

It is found in the cytoplasm. In terms of biological role, one of the essential components for the initiation of protein synthesis. Stabilizes the binding of IF-2 and IF-3 on the 30S subunit to which N-formylmethionyl-tRNA(fMet) subsequently binds. Helps modulate mRNA selection, yielding the 30S pre-initiation complex (PIC). Upon addition of the 50S ribosomal subunit IF-1, IF-2 and IF-3 are released leaving the mature 70S translation initiation complex. The sequence is that of Translation initiation factor IF-1 from Clostridium acetobutylicum (strain ATCC 824 / DSM 792 / JCM 1419 / IAM 19013 / LMG 5710 / NBRC 13948 / NRRL B-527 / VKM B-1787 / 2291 / W).